Reading from the N-terminus, the 483-residue chain is Galactose-3-O-sulfotransferase 4 (483 aa).

The Cytoplasmic segment spans residues 1–18; the sequence is MGVLSPTRTMRLWGPRSL. Residues 19–39 traverse the membrane as a helical; Signal-anchor for type II membrane protein segment; that stretch reads GVALGVFMTIGFALQLLGGPF. Topologically, residues 40 to 483 are lumenal; the sequence is QRRLPGLQLR…PLKTSRRPSP (444 aa). Positions 225 to 248 are disordered; sequence KRGNPHVSRDPNPPQLPSGAGPPA. Asn371 is a glycosylation site (N-linked (GlcNAc...) asparagine).

This sequence belongs to the galactose-3-O-sulfotransferase family. It depends on Mn(2+) as a cofactor.

The protein localises to the golgi apparatus. It is found in the golgi stack membrane. It functions in the pathway protein modification; carbohydrate sulfation. Catalyzes the transfer of sulfate to beta-1,3-linked galactose residues in O-linked glycoproteins. Good substrates include asialofetuin, Gal-beta-1,3-GalNAc and Gal-beta-1,3 (GlcNAc-beta-1,6)GalNAc. This chain is Galactose-3-O-sulfotransferase 4 (GAL3ST4), found in Bos taurus (Bovine).